A 64-amino-acid polypeptide reads, in one-letter code: Putative antitoxin MJ0975 (64 aa).

The protein belongs to the UPF0165 family.

Functionally, possibly the antitoxin component of a type II toxin-antitoxin (TA) system. Its cognate toxin is VapC2 (Potential). This chain is Putative antitoxin MJ0975 (vapB2), found in Methanocaldococcus jannaschii (strain ATCC 43067 / DSM 2661 / JAL-1 / JCM 10045 / NBRC 100440) (Methanococcus jannaschii).